The following is a 242-amino-acid chain: Dehydration-responsive element-binding protein 1J (242 aa).

Low complexity predominate over residues 20 to 29; that stretch reads SSATTAATAT. The tract at residues 20–44 is disordered; the sequence is SSATTAATATGPASPKRPAGRTKFQ. Positions 50 to 109 form a DNA-binding region, AP2/ERF; that stretch reads VFRGVRRRGRAGRWVCEVRVPGSRGDRLWVGTFDTAEEAARAHDAAMLAMCGASASLNFT. The segment at 143 to 184 is disordered; sequence FQRRGSTAATATATSGDAASTAPPSSSPVLSPNDDNASSAST. The segment covering 148–184 has biased composition (low complexity); that stretch reads STAATATATSGDAASTAPPSSSPVLSPNDDNASSAST.

It belongs to the AP2/ERF transcription factor family. ERF subfamily.

Its subcellular location is the nucleus. In terms of biological role, transcriptional activator that binds specifically to the DNA sequence 5'-[AG]CCGAC-3'. Binding to the C-repeat/DRE element mediates high salinity- and dehydration-inducible transcription. In Oryza sativa subsp. indica (Rice), this protein is Dehydration-responsive element-binding protein 1J (DREB1J).